A 741-amino-acid chain; its full sequence is Cytosolic phospholipase A2 (741 aa).

One can recognise a C2 domain in the interval 1-116; sequence MSNIIVEHQY…KVAQMEHVTL (116 aa). Positions 1–172 are phospholipid binding; sequence MSNIIVEHQY…IKKLLKMENP (172 aa). Residues D34, T35, D37, N59, D87, A88, and N89 each contribute to the Ca(2+) site. Residues 132 to 729 enclose the PLA2c domain; that stretch reads VCASTDLRFS…SLSEIENKKF (598 aa). S223 acts as the Nucleophile in catalysis. The tract at residues 406-453 is disordered; the sequence is TSSSTMEEELEQIKPEHIVGDDSADNEEETQRGGTESADAEDERQRHA. Positions 416–425 are enriched in basic and acidic residues; sequence EQIKPEHIVG. S498 carries the post-translational modification Phosphoserine; by MAPK. D540 functions as the Proton acceptor in the catalytic mechanism.

In terms of processing, activated by phosphorylation on a serine residue.

Its subcellular location is the cytoplasm. The protein resides in the cytoplasmic vesicle. It carries out the reaction a 1,2-diacyl-sn-glycero-3-phosphocholine + H2O = a 1-acyl-sn-glycero-3-phosphocholine + a fatty acid + H(+). It catalyses the reaction a 1-acyl-sn-glycero-3-phosphocholine + H2O = sn-glycerol 3-phosphocholine + a fatty acid + H(+). Its activity is regulated as follows. Stimulated by agonists such as ATP, EGF, thrombin and bradykinin as well as by cytosolic Ca(2+). Its function is as follows. Selectively hydrolyzes arachidonyl phospholipids in the sn-2 position releasing arachidonic acid. Together with its lysophospholipid activity, it is implicated in the initiation of the inflammatory response. In Danio rerio (Zebrafish), this protein is Cytosolic phospholipase A2 (pla2g4a).